We begin with the raw amino-acid sequence, 843 residues long: RNA-binding protein 25 (843 aa).

A disordered region spans residues 1-30 (MSFPPHLNRPPMGIPALPPGIPPPQFPGFP). The segment covering 12 to 30 (MGIPALPPGIPPPQFPGFP) has biased composition (pro residues). One can recognise an RRM domain in the interval 87–164 (TTVFVGNISE…KKLLVKVDAK (78 aa)). N6-acetyllysine is present on lysine 135. Disordered stretches follow at residues 171–202 (EWKA…ETKR) and 219–243 (SSEL…KKED). A phosphoserine mark is found at serine 226 and serine 229. Glycyl lysine isopeptide (Lys-Gly) (interchain with G-Cter in SUMO2) cross-links involve residues lysine 261, lysine 273, and lysine 430. 2 stretches are compositionally biased toward basic and acidic residues: residues 280 to 433 (EISK…KRDR) and 521 to 573 (RLRD…ERRR). Disordered regions lie at residues 280–442 (EISK…DAYE) and 498–688 (EFLE…KRKK). Residues 285 to 644 (RDTHKKLEEE…PNTPGDESPC (360 aa)) are necessary for nuclear speckle localization. Lysine 578 is covalently cross-linked (Glycyl lysine isopeptide (Lys-Gly) (interchain with G-Cter in SUMO2)). The residue at position 583 (serine 583) is a Phosphoserine. Positions 590 to 599 (KQEKEEKREE) are enriched in basic and acidic residues. A compositionally biased stretch (low complexity) spans 621–630 (SSAPSVSSAS). Lysine 671 is covalently cross-linked (Glycyl lysine isopeptide (Lys-Gly) (interchain with G-Cter in SUMO2)). The segment covering 674-683 (ASNSPGQPNS) has biased composition (polar residues). Phosphoserine occurs at positions 677 and 683. Glycyl lysine isopeptide (Lys-Gly) (interchain with G-Cter in SUMO2) cross-links involve residues lysine 688 and lysine 697. The residue at position 703 (serine 703) is a Phosphoserine. Lysine 722 participates in a covalent cross-link: Glycyl lysine isopeptide (Lys-Gly) (interchain with G-Cter in SUMO2). Residues 750-843 (PELFAYPLDW…TEAKKIGLVK (94 aa)) enclose the PWI domain.

As to quaternary structure, interacts with LUC7L3 and SRRM1. Specifically associates with functional splicing complexes, including Sm proteins and U1, U2, U4, U5 and U6 snRNAs. Associates with exon junction complex (EJC) proteins, including APEX1, DDX39B, NCBP1, RBM8A and RNPS1. Interaction with NCBP1 is RNA-dependent. In terms of processing, sumoylated.

Its subcellular location is the nucleus speckle. It is found in the cytoplasm. Its function is as follows. RNA-binding protein that acts as a regulator of alternative pre-mRNA splicing. Involved in apoptotic cell death through the regulation of the apoptotic factor BCL2L1 isoform expression. Modulates the ratio of proapoptotic BCL2L1 isoform S to antiapoptotic BCL2L1 isoform L mRNA expression. When overexpressed, stimulates proapoptotic BCL2L1 isoform S 5'-splice site (5'-ss) selection, whereas its depletion caused the accumulation of antiapoptotic BCL2L1 isoform L. Promotes BCL2L1 isoform S 5'-ss usage through the 5'-CGGGCA-3' RNA sequence. Its association with LUC7L3 promotes U1 snRNP binding to a weak 5' ss in a 5'-CGGGCA-3'-dependent manner. Binds to the exonic splicing enhancer 5'-CGGGCA-3' RNA sequence located within exon 2 of the BCL2L1 pre-mRNA. Also involved in the generation of an abnormal and truncated splice form of SCN5A in heart failure. In Homo sapiens (Human), this protein is RNA-binding protein 25 (RBM25).